We begin with the raw amino-acid sequence, 368 residues long: Ankyrin repeat domain-containing protein 40 (368 aa).

Residue M1 is modified to N-acetylmethionine. 2 ANK repeats span residues 9 to 38 (EQQE…DVNS) and 43 to 72 (NGWT…DKEI). Disordered regions lie at residues 93 to 115 (MGVE…KKES), 139 to 176 (DSAQ…GTFP), and 196 to 238 (ILRT…NGTY). Over residues 95 to 107 (VEEEDDDDDDDDN) the composition is skewed to acidic residues. The segment covering 149–169 (STPPASPPADGSPPLLPPGEP) has biased composition (pro residues). Residues 212–224 (PVSQSRSLFSSVP) show a composition bias toward polar residues.

This chain is Ankyrin repeat domain-containing protein 40 (ANKRD40), found in Homo sapiens (Human).